A 318-amino-acid chain; its full sequence is Putative HTH-type transcriptional regulatory protein TK0539 (318 aa).

Residues 131 to 189 (LRELREKHGYSVNELAQLLGVSRKSLLNYERGEQAVSLDVAIQLEEIFDEALAEPIDIL) form the HTH cro/C1-type domain. The H-T-H motif DNA-binding region spans 142–161 (VNELAQLLGVSRKSLLNYER).

This is Putative HTH-type transcriptional regulatory protein TK0539 from Thermococcus kodakarensis (strain ATCC BAA-918 / JCM 12380 / KOD1) (Pyrococcus kodakaraensis (strain KOD1)).